The chain runs to 70 residues: Small ribosomal subunit protein bS21 (70 aa).

This sequence belongs to the bacterial ribosomal protein bS21 family.

This chain is Small ribosomal subunit protein bS21, found in Methylibium petroleiphilum (strain ATCC BAA-1232 / LMG 22953 / PM1).